We begin with the raw amino-acid sequence, 981 residues long: GPI ethanolamine phosphate transferase 1 (981 aa).

Residues 1–6 lie on the Cytoplasmic side of the membrane; it reads MAGSSR. Residues 7–27 traverse the membrane as a helical segment; that stretch reads IGFMAIAVAFHLVYILSIFDI. Residues 28–464 are Lumenal-facing; sequence YFVSPIVTGM…LQTYDWLFLR (437 aa). N-linked (GlcNAc...) asparagine glycans are attached at residues N148, N211, and N295. Residues 465–485 form a helical membrane-spanning segment; it reads ALITIGYLGWMAYATTTVLSL. At 486–496 the chain is on the cytoplasmic side; that stretch reads YVVKESMSPQR. Residues 497–517 traverse the membrane as a helical segment; sequence TLLGSAFFLSLLVALYSSFII. The Lumenal portion of the chain corresponds to 518-519; it reads SK. The helical transmembrane segment at 520 to 540 threads the bilayer; the sequence is SPPAYYLYAFFPVLFWEEVYA. Residues 541 to 560 lie on the Cytoplasmic side of the membrane; it reads RRANVAKGFQALFGHVKSGG. The helical transmembrane segment at 561 to 581 threads the bilayer; that stretch reads AVVALVFNVVLYLGVIQSLAL. The Lumenal segment spans residues 582–587; that stretch reads AYIHRE. A helical transmembrane segment spans residues 588 to 608; that stretch reads ILTGLFVLGAFWPMTQGISFL. The Cytoplasmic portion of the chain corresponds to 609-611; sequence RSH. Residues 612–632 traverse the membrane as a helical segment; the sequence is LFLSMLWFFSCLAMSTFTLLP. At 633–638 the chain is on the lumenal side; sequence AMKVED. A helical membrane pass occupies residues 639–659; sequence IPLIMAGGGLMTFVGLAYLVL. Residues 660–681 lie on the Cytoplasmic side of the membrane; sequence EDFILSDVSSSKTKLKRLHTSR. Residues 682-702 form a helical membrane-spanning segment; sequence TLLGIQVGLIILAMLVTHSSA. Residues 703–708 are Lumenal-facing; it reads TSLQAK. A helical membrane pass occupies residues 709-729; that stretch reads LGLPKGNQIVGWFVLVTSLLM. The Cytoplasmic portion of the chain corresponds to 730-744; it reads PLAYRLQPNSHYMHR. A helical transmembrane segment spans residues 745–767; it reads LAIIFLTCAPTFVILTISYEGLF. Over 768–819 the chain is Lumenal; that stretch reads YVAFSITLLSWVRLEYAVDAFTQEKAKKQATVAGSQQHTPSTFRPLSLSDAR. A helical membrane pass occupies residues 820 to 840; sequence IALFFMVLLQSAFFSTGNIAS. At 841-862 the chain is on the cytoplasmic side; that stretch reads ISSFSLESVSRLIPVFDPFSQG. The chain crosses the membrane as a helical span at residues 863–883; the sequence is ALLILKIIIPFFLISANLGVL. Over 884–892 the chain is Lumenal; the sequence is NKRLGVAPS. Residues 893-913 form a helical membrane-spanning segment; sequence AIFMVVLTASDVLTLYFFWVV. The Cytoplasmic segment spans residues 914-929; sequence KDEGSWLEIGSTITHF. Residues 930–950 traverse the membrane as a helical segment; that stretch reads AIASFLCVFVAALEFVSAAFI. Topologically, residues 951–981 are lumenal; the sequence is AGIEVEDTKSAALTSASTKADEKVPPVAGAE.

It belongs to the PIGG/PIGN/PIGO family. PIGN subfamily.

Its subcellular location is the endoplasmic reticulum membrane. Its pathway is glycolipid biosynthesis; glycosylphosphatidylinositol-anchor biosynthesis. Ethanolamine phosphate transferase involved in glycosylphosphatidylinositol-anchor biosynthesis. Transfers ethanolamine phosphate to the first alpha-1,4-linked mannose of the glycosylphosphatidylinositol precursor of GPI-anchor. The protein is GPI ethanolamine phosphate transferase 1 (MCD4) of Gibberella zeae (strain ATCC MYA-4620 / CBS 123657 / FGSC 9075 / NRRL 31084 / PH-1) (Wheat head blight fungus).